The primary structure comprises 471 residues: Isochorismate synthase MenF (471 aa).

Catalysis depends on Lys226, which acts as the Proton acceptor. Glu275 (proton donor) is an active-site residue. 2 residues coordinate Mg(2+): Glu319 and Glu454.

Belongs to the isochorismate synthase family. The cofactor is Mg(2+).

The enzyme catalyses chorismate = isochorismate. It functions in the pathway quinol/quinone metabolism; 1,4-dihydroxy-2-naphthoate biosynthesis; 1,4-dihydroxy-2-naphthoate from chorismate: step 1/7. The protein operates within quinol/quinone metabolism; menaquinone biosynthesis. In terms of biological role, catalyzes the conversion of chorismate to isochorismate. The polypeptide is Isochorismate synthase MenF (Bacillus subtilis (strain 168)).